The primary structure comprises 463 residues: Sugar transporter ERD6-like 7 (463 aa).

Helical transmembrane passes span 26–46, 69–89, 103–123, 126–146, 157–177, 181–201, 264–284, 299–319, 327–347, 357–377, 396–416, and 426–446; these read WMVY…GSCA, LFGS…GPIA, AFCV…ALDL, LATG…IAEI, TLNQ…GTLV, VLAL…FFIP, VLIA…GICF, LGMI…APIV, LLLV…VSFY, AVPV…SAGM, VAGG…SYTF, and GTFL…IAIV.

It belongs to the major facilitator superfamily. Sugar transporter (TC 2.A.1.1) family.

It is found in the membrane. Its function is as follows. Sugar transporter. This Arabidopsis thaliana (Mouse-ear cress) protein is Sugar transporter ERD6-like 7.